Here is a 91-residue protein sequence, read N- to C-terminus: Putative septation protein SpoVG (91 aa).

This sequence belongs to the SpoVG family.

Could be involved in septation. The sequence is that of Putative septation protein SpoVG from Caldanaerobacter subterraneus subsp. tengcongensis (strain DSM 15242 / JCM 11007 / NBRC 100824 / MB4) (Thermoanaerobacter tengcongensis).